The primary structure comprises 361 residues: Cytochrome P450 family protein EryCII (361 aa).

It belongs to the cytochrome P450 family. In terms of assembly, heterotetramer composed of EryCII and EryCIII.

Its pathway is antibiotic biosynthesis; erythromycin biosynthesis. Functionally, involved in the erythromycin biosynthesis pathway. Acts by forming a complex and stabilizing the desosaminyl transferase EryCIII. The protein is Cytochrome P450 family protein EryCII (eryCII) of Saccharopolyspora erythraea (strain ATCC 11635 / DSM 40517 / JCM 4748 / NBRC 13426 / NCIMB 8594 / NRRL 2338).